Here is a 342-residue protein sequence, read N- to C-terminus: Protein-ribulosamine 3-kinase, chloroplastic (342 aa).

The transit peptide at 1–46 directs the protein to the chloroplast; it reads MANVALLSAASPSTSSAAPRLRHVARRRPSRRSACPRSAASRLSIM. 141-143 contacts ATP; the sequence is EFI. Aspartate 246 acts as the Proton acceptor in catalysis.

It belongs to the fructosamine kinase family.

The protein resides in the plastid. Its subcellular location is the chloroplast. It carries out the reaction N(6)-D-ribulosyl-L-lysyl-[protein] + ATP = N(6)-(3-O-phospho-D-ribulosyl)-L-lysyl-[protein] + ADP + H(+). The catalysed reaction is N(6)-(D-erythrulosyl)-L-lysyl-[protein] + ATP = N(6)-(3-O-phospho-D-erythrulosyl)-L-lysyl-[protein] + ADP + H(+). In terms of biological role, initiates a process leading to the deglycation of proteins. Phosphorylates low-molecular-mass and protein-bound erythrulosamines and ribulosamines, but not fructosamines or psicosamines, on the third carbon of the sugar moiety. Protein-bound erythrulosamine 3-phosphates and ribulosamine 3-phosphates are unstable and decompose under physiological conditions. The protein is Protein-ribulosamine 3-kinase, chloroplastic of Oryza sativa subsp. indica (Rice).